The sequence spans 154 residues: UPF0225 protein YE2246 (154 aa).

Belongs to the UPF0225 family.

This is UPF0225 protein YE2246 from Yersinia enterocolitica serotype O:8 / biotype 1B (strain NCTC 13174 / 8081).